The sequence spans 216 residues: Adenylate kinase (216 aa).

10-15 (GAGKGT) contacts ATP. Residues 30-59 (STGDIFRAHMSQGTPLGKLAKEYVDAGKYV) form an NMP region. AMP-binding positions include Thr31, Arg36, 57 to 59 (KYV), 85 to 88 (GYPR), and Gln92. Residues 126–163 (GRRVCRSCGATYHVRFNPPREAGRCDRCGGELYQRSDD) are LID. Arg127 contributes to the ATP binding site. 2 residues coordinate Zn(2+): Cys130 and Cys133. ATP is bound at residue 136-137 (TY). The Zn(2+) site is built by Cys150 and Cys153. AMP-binding residues include Arg160 and Arg171. Gln199 is a binding site for ATP.

Belongs to the adenylate kinase family. Monomer.

The protein localises to the cytoplasm. The catalysed reaction is AMP + ATP = 2 ADP. It functions in the pathway purine metabolism; AMP biosynthesis via salvage pathway; AMP from ADP: step 1/1. Its function is as follows. Catalyzes the reversible transfer of the terminal phosphate group between ATP and AMP. Plays an important role in cellular energy homeostasis and in adenine nucleotide metabolism. In Symbiobacterium thermophilum (strain DSM 24528 / JCM 14929 / IAM 14863 / T), this protein is Adenylate kinase.